Consider the following 393-residue polypeptide: Branched-chain-amino-acid aminotransferase, mitochondrial (393 aa).

A mitochondrion-targeting transit peptide spans 1–27 (MATAALRQIWIPRFLPVPWFLCGSRRY). Tyr169 is a substrate binding site. Residue Lys230 is modified to N6-(pyridoxal phosphate)lysine. Lys322 is subject to N6-acetyllysine.

It belongs to the class-IV pyridoxal-phosphate-dependent aminotransferase family. In terms of assembly, homodimer. Pyridoxal 5'-phosphate is required as a cofactor.

The protein localises to the mitochondrion. The catalysed reaction is L-leucine + 2-oxoglutarate = 4-methyl-2-oxopentanoate + L-glutamate. It carries out the reaction L-isoleucine + 2-oxoglutarate = (S)-3-methyl-2-oxopentanoate + L-glutamate. It catalyses the reaction L-valine + 2-oxoglutarate = 3-methyl-2-oxobutanoate + L-glutamate. Catalyzes the first reaction in the catabolism of the essential branched chain amino acids leucine, isoleucine, and valine. May also function as a transporter of branched chain alpha-keto acids. The protein is Branched-chain-amino-acid aminotransferase, mitochondrial (BCAT2) of Bos taurus (Bovine).